Reading from the N-terminus, the 405-residue chain is MTEATSELVIWRNGRLATLNPDHAQPYGLLERHALLVRDGRIAAIVAEDDVPSGRSIDLEGRLVTPGLIDCHTHLVFGGSRAQEWEQRLNGVSYQTISASGGGINSTVRATRDSSEAELLALAQPRLERLLREGVTTLEIKSGYGLDLPNERKMLRVARQLADHNGVELSATLLSAHATPPEYQGDADGYITLVCETILPTLWQEGLFESVDVFCENVGFSPQQTERVFQAAQALGIPVKGHVEQLSSLGGAQLVSRYHGLSADHIEYLTEEGVAAMRESGTVAALLPGAFYFLNETRKPPVELLRKYQVPMAVATDFNPGTSPFASLHLAMNMACVKFGLTPEEAWAGVTRHAARALGRQASHGQLAPGFVANFAIWDAEHPVEMVYEPGRSPLWHRVVQGELQ.

Positions 72 and 74 each coordinate Fe(3+). Zn(2+) is bound by residues His72 and His74. 3 residues coordinate 4-imidazolone-5-propanoate: Arg81, Tyr144, and His177. Residue Tyr144 coordinates N-formimidoyl-L-glutamate. Position 242 (His242) interacts with Fe(3+). His242 is a Zn(2+) binding site. Gln245 serves as a coordination point for 4-imidazolone-5-propanoate. Asp317 lines the Fe(3+) pocket. Asp317 contacts Zn(2+). Residues Asn319 and Gly321 each contribute to the N-formimidoyl-L-glutamate site. Residue Thr322 coordinates 4-imidazolone-5-propanoate.

Belongs to the metallo-dependent hydrolases superfamily. HutI family. Zn(2+) serves as cofactor. It depends on Fe(3+) as a cofactor.

It is found in the cytoplasm. The catalysed reaction is 4-imidazolone-5-propanoate + H2O = N-formimidoyl-L-glutamate. It functions in the pathway amino-acid degradation; L-histidine degradation into L-glutamate; N-formimidoyl-L-glutamate from L-histidine: step 3/3. Functionally, catalyzes the hydrolytic cleavage of the carbon-nitrogen bond in imidazolone-5-propanoate to yield N-formimidoyl-L-glutamate. It is the third step in the universal histidine degradation pathway. This Klebsiella pneumoniae subsp. pneumoniae (strain ATCC 700721 / MGH 78578) protein is Imidazolonepropionase.